We begin with the raw amino-acid sequence, 207 residues long: MARYLGPKAKLARREGTDLYLKSARRSISDKSKFESKPGQHGRTSGSRTSDFGLQLREKQKVKRMYGVLEKQFRRYFAEADRRKGNTGANLLLLLESRLDNVVYRMGFGSTRAEARQLVSHKAVTVNGQSVNIPSYLVKAGDVISVREKSKKQLRIIDALKLADSIGLPAWVSVDLTKMEGIFKKAPDRDEFGAEINESLIVELYSR.

Residues lysine 22–leucine 54 are disordered. The span at serine 27–proline 38 shows a compositional bias: basic and acidic residues. Polar residues predominate over residues glycine 42–phenylalanine 52. Residues serine 97–isoleucine 157 enclose the S4 RNA-binding domain.

Belongs to the universal ribosomal protein uS4 family. As to quaternary structure, part of the 30S ribosomal subunit. Contacts protein S5. The interaction surface between S4 and S5 is involved in control of translational fidelity.

One of the primary rRNA binding proteins, it binds directly to 16S rRNA where it nucleates assembly of the body of the 30S subunit. Its function is as follows. With S5 and S12 plays an important role in translational accuracy. The protein is Small ribosomal subunit protein uS4 of Leptothrix cholodnii (strain ATCC 51168 / LMG 8142 / SP-6) (Leptothrix discophora (strain SP-6)).